Reading from the N-terminus, the 439-residue chain is Putative porin QuiX (439 aa).

The first 22 residues, Met1–Ala22, serve as a signal peptide directing secretion.

Belongs to the OprB family.

The protein localises to the cell outer membrane. Could be involved in the transport of quinate or shikimate. The chain is Putative porin QuiX (quiX) from Acinetobacter baylyi (strain ATCC 33305 / BD413 / ADP1).